A 218-amino-acid polypeptide reads, in one-letter code: Protein N-lysine methyltransferase METTL21A (218 aa).

Residues tryptophan 47, 73–75 (GAG), aspartate 94, tryptophan 125, and alanine 143 contribute to the S-adenosyl-L-methionine site.

Belongs to the methyltransferase superfamily. METTL21 family. As to quaternary structure, interacts with heat shock 70 family members; at least some of these proteins are methylation substrates.

Its subcellular location is the cytoplasm. It carries out the reaction L-lysyl-[protein] + 3 S-adenosyl-L-methionine = N(6),N(6),N(6)-trimethyl-L-lysyl-[protein] + 3 S-adenosyl-L-homocysteine + 3 H(+). Functionally, protein-lysine methyltransferase that selectively trimethylates residues in heat shock protein 70 (HSP70) family members. Contributes to the in vivo trimethylation of Lys residues in HSPA1 and HSPA8. In vitro methylates 'Lys-561' in HSPA1, 'Lys-564' in HSPA2, 'Lys-585' in HSPA5, 'Lys-563' in HSPA6 and 'Lys-561' in HSPA8. This is Protein N-lysine methyltransferase METTL21A (Mettl21A) from Mus musculus (Mouse).